The chain runs to 463 residues: Probable diacyglycerol O-acyltransferase tgs1 (463 aa).

His-137 acts as the Proton acceptor in catalysis.

The protein belongs to the long-chain O-acyltransferase family.

The catalysed reaction is an acyl-CoA + a 1,2-diacyl-sn-glycerol = a triacyl-sn-glycerol + CoA. Its pathway is glycerolipid metabolism; triacylglycerol biosynthesis. Its function is as follows. Catalyzes the terminal and only committed step in triacylglycerol synthesis by using diacylglycerol and fatty acyl CoA as substrates. Required for storage lipid synthesis. In Mycobacterium tuberculosis (strain CDC 1551 / Oshkosh), this protein is Probable diacyglycerol O-acyltransferase tgs1 (tgs1).